The sequence spans 416 residues: Pigment epithelium-derived factor (416 aa).

A signal peptide spans 1–20; that stretch reads MQALVLLLWTGALLGFGRCQ. Residues Ser112 and Ser225 each carry the phosphoserine modification. An N-linked (GlcNAc...) asparagine glycan is attached at Asn283.

Belongs to the serpin family. As to quaternary structure, interacts with PNPLA2; this interaction stimulates the phospholipase A2 activity of PNPLA2. Retinal pigment epithelial cells. Located in the interphotoreceptor matrix (IPM) which is between the retinal pigment epithelium and the neural retina.

It localises to the secreted. The protein resides in the melanosome. In terms of biological role, neurotrophic protein; induces extensive neuronal differentiation in retinoblastoma cells. Potent inhibitor of angiogenesis. As it does not undergo the S (stressed) to R (relaxed) conformational transition characteristic of active serpins, it exhibits no serine protease inhibitory activity. The sequence is that of Pigment epithelium-derived factor (SERPINF1) from Bos taurus (Bovine).